The sequence spans 340 residues: UPF0324 membrane protein BA_5405/GBAA_5405/BAS5024 (340 aa).

Transmembrane regions (helical) follow at residues 13 to 35 (FGFS…LAEL), 40 to 59 (IMGQ…AAIG), 99 to 118 (VLVI…YGLT), 128 to 150 (GILT…APQV), 157 to 179 (TAVG…TLLY), 189 to 211 (YGVF…APGG), 218 to 240 (AVIV…GVWF), 255 to 277 (LPIP…GIIP), 279 to 301 (VVAG…GLGL), and 316 to 338 (FVAG…YALG).

Belongs to the UPF0324 family.

Its subcellular location is the cell membrane. The protein is UPF0324 membrane protein BA_5405/GBAA_5405/BAS5024 of Bacillus anthracis.